Here is a 697-residue protein sequence, read N- to C-terminus: Methionine--tRNA ligase (697 aa).

The 'HIGH' region motif lies at 12-22; the sequence is PYANGHFHIGH. Residues cysteine 143, cysteine 146, cysteine 156, and cysteine 159 each coordinate Zn(2+). The 'KMSKS' region signature appears at 342 to 346; that stretch reads KMSKS. Residue lysine 345 participates in ATP binding. The segment at 557 to 577 is disordered; sequence FEPPAEPSPQTSPAAAGAGAV. The region spanning 591–697 is the tRNA-binding domain; it reads DFTKIDLRLA…PGAVPGLRVR (107 aa).

Belongs to the class-I aminoacyl-tRNA synthetase family. MetG type 1 subfamily. As to quaternary structure, homodimer. Requires Zn(2+) as cofactor.

The protein resides in the cytoplasm. The catalysed reaction is tRNA(Met) + L-methionine + ATP = L-methionyl-tRNA(Met) + AMP + diphosphate. Is required not only for elongation of protein synthesis but also for the initiation of all mRNA translation through initiator tRNA(fMet) aminoacylation. The polypeptide is Methionine--tRNA ligase (Methylibium petroleiphilum (strain ATCC BAA-1232 / LMG 22953 / PM1)).